We begin with the raw amino-acid sequence, 335 residues long: S-adenosylmethionine:tRNA ribosyltransferase-isomerase (335 aa).

This sequence belongs to the QueA family. Monomer.

Its subcellular location is the cytoplasm. The catalysed reaction is 7-aminomethyl-7-carbaguanosine(34) in tRNA + S-adenosyl-L-methionine = epoxyqueuosine(34) in tRNA + adenine + L-methionine + 2 H(+). The protein operates within tRNA modification; tRNA-queuosine biosynthesis. Transfers and isomerizes the ribose moiety from AdoMet to the 7-aminomethyl group of 7-deazaguanine (preQ1-tRNA) to give epoxyqueuosine (oQ-tRNA). The chain is S-adenosylmethionine:tRNA ribosyltransferase-isomerase from Thermotoga petrophila (strain ATCC BAA-488 / DSM 13995 / JCM 10881 / RKU-1).